Reading from the N-terminus, the 470-residue chain is ATP synthase subunit beta (470 aa).

151 to 158 serves as a coordination point for ATP; it reads GGAGVGKT.

The protein belongs to the ATPase alpha/beta chains family. As to quaternary structure, F-type ATPases have 2 components, CF(1) - the catalytic core - and CF(0) - the membrane proton channel. CF(1) has five subunits: alpha(3), beta(3), gamma(1), delta(1), epsilon(1). CF(0) has three main subunits: a(1), b(2) and c(9-12). The alpha and beta chains form an alternating ring which encloses part of the gamma chain. CF(1) is attached to CF(0) by a central stalk formed by the gamma and epsilon chains, while a peripheral stalk is formed by the delta and b chains.

It is found in the cell membrane. The enzyme catalyses ATP + H2O + 4 H(+)(in) = ADP + phosphate + 5 H(+)(out). Its function is as follows. Produces ATP from ADP in the presence of a proton gradient across the membrane. The catalytic sites are hosted primarily by the beta subunits. This is ATP synthase subunit beta from Mycoplasma mobile (strain ATCC 43663 / 163K / NCTC 11711) (Mesomycoplasma mobile).